A 361-amino-acid chain; its full sequence is WAT1-related protein At4g01450 (361 aa).

Helical transmembrane passes span 8 to 28 (WAPMIVLIVSNMIAGMVNALV), 40 to 60 (VIATYRLGISTLFLLPVAYFW), 76 to 96 (LFVSALFGASLMQYFYLLGLS), 103 to 123 (GSAFWAIMPSLTFVMALIFGF), 132 to 152 (IGYGVVLGTLISLVGGLLLTM), 177 to 197 (WIKGCFFLLTGVVLFSSWMLI), 209 to 229 (YSSTVILSVFGTLQCALLSLI), 243 to 263 (LTIITVVIAGVVAQGMCTVGM), 273 to 293 (VVSSSFSPVVLMSATVFDFLI), and 298 to 318 (IYLGSVIGSVVVVIGLYIFLW). EamA domains are found at residues 21 to 142 (AGMV…GTLI) and 194 to 317 (WMLI…YIFL).

The protein belongs to the drug/metabolite transporter (DMT) superfamily. Plant drug/metabolite exporter (P-DME) (TC 2.A.7.4) family.

The protein resides in the membrane. The protein is WAT1-related protein At4g01450 of Arabidopsis thaliana (Mouse-ear cress).